The sequence spans 186 residues: dCTP deaminase (186 aa).

K107–R112 is a dCTP binding site. Residue E133 is the Proton donor/acceptor of the active site. DCTP contacts are provided by Q152, Y166, and Q176.

This sequence belongs to the dCTP deaminase family. As to quaternary structure, homotrimer.

It catalyses the reaction dCTP + H2O + H(+) = dUTP + NH4(+). It participates in pyrimidine metabolism; dUMP biosynthesis; dUMP from dCTP (dUTP route): step 1/2. Functionally, catalyzes the deamination of dCTP to dUTP. The chain is dCTP deaminase from Campylobacter jejuni (strain RM1221).